A 328-amino-acid polypeptide reads, in one-letter code: Arabinose 5-phosphate isomerase KdsD (328 aa).

The region spanning 42–184 (CEKMFWCKGK…AVALLKARGF (143 aa)) is the SIS domain. Substrate contacts are provided by residues 75–76 (GT), His82, His88, 114–123 (ALIPVLKRLH), 148–150 (KVA), Thr222, and Asp275. His82 provides a ligand contact to Zn(2+). The CBS 1 domain occupies 210–268 (MHTGDEIPHVKKTASLRDALLEVTRKNLGMTVICDDNMMIEGIFTDGDLRRVFDMGVDV). Residues 277–328 (MTPGGIRVRPGILAVEALNLMQSRHITSVMVADGDHLLGVLHMHDLLRAGVV) form the CBS 2 domain.

It belongs to the SIS family. GutQ/KpsF subfamily. As to quaternary structure, homotetramer.

The enzyme catalyses D-arabinose 5-phosphate = D-ribulose 5-phosphate. It functions in the pathway carbohydrate biosynthesis; 3-deoxy-D-manno-octulosonate biosynthesis; 3-deoxy-D-manno-octulosonate from D-ribulose 5-phosphate: step 1/3. It participates in bacterial outer membrane biogenesis; lipopolysaccharide biosynthesis. Functionally, involved in the biosynthesis of 3-deoxy-D-manno-octulosonate (KDO), a unique 8-carbon sugar component of lipopolysaccharides (LPSs). Catalyzes the reversible aldol-ketol isomerization between D-ribulose 5-phosphate (Ru5P) and D-arabinose 5-phosphate (A5P). The protein is Arabinose 5-phosphate isomerase KdsD (kdsD) of Shigella flexneri.